A 178-amino-acid chain; its full sequence is SPbeta prophage-derived uncharacterized protein YonC (178 aa).

This chain is SPbeta prophage-derived uncharacterized protein YonC (yonC), found in Bacillus subtilis (strain 168).